The following is a 145-amino-acid chain: D-aminoacyl-tRNA deacylase (145 aa).

Positions 137–138 match the Gly-cisPro motif, important for rejection of L-amino acids motif; that stretch reads GP.

This sequence belongs to the DTD family. As to quaternary structure, homodimer.

It localises to the cytoplasm. The catalysed reaction is glycyl-tRNA(Ala) + H2O = tRNA(Ala) + glycine + H(+). It carries out the reaction a D-aminoacyl-tRNA + H2O = a tRNA + a D-alpha-amino acid + H(+). In terms of biological role, an aminoacyl-tRNA editing enzyme that deacylates mischarged D-aminoacyl-tRNAs. Also deacylates mischarged glycyl-tRNA(Ala), protecting cells against glycine mischarging by AlaRS. Acts via tRNA-based rather than protein-based catalysis; rejects L-amino acids rather than detecting D-amino acids in the active site. By recycling D-aminoacyl-tRNA to D-amino acids and free tRNA molecules, this enzyme counteracts the toxicity associated with the formation of D-aminoacyl-tRNA entities in vivo and helps enforce protein L-homochirality. This Alteromonas mediterranea (strain DSM 17117 / CIP 110805 / LMG 28347 / Deep ecotype) protein is D-aminoacyl-tRNA deacylase.